Reading from the N-terminus, the 151-residue chain is UPF0208 membrane protein NT01EI_2692 (151 aa).

The next 2 helical transmembrane spans lie at 46–65 (FAIR…QIAL) and 69–91 (LGPA…WWLG).

The protein belongs to the UPF0208 family.

The protein localises to the cell inner membrane. In Edwardsiella ictaluri (strain 93-146), this protein is UPF0208 membrane protein NT01EI_2692.